The following is a 3477-amino-acid chain: Abnormal spindle-like microcephaly-associated protein (3477 aa).

Residues 1–30 form a disordered region; sequence MANRRVGRGCWEVSPTERRPPAGLRGPAAE. S280, S283, S367, and S392 each carry phosphoserine. Residues 308-409 are sufficient for interaction with KATNA1:KATNB1; the sequence is ITQSQIHFLS…NMAYMCTSQQ (102 aa). Over residues 415 to 424 the composition is skewed to polar residues; that stretch reads LSNENSQVPQ. Disordered regions lie at residues 415–443 and 559–581; these read LSNE…ECQG and KNEV…DGSM. S425 carries the phosphoserine modification. Over residues 560–570 the composition is skewed to polar residues; that stretch reads NEVTPSSTTAS. S605 carries the phosphoserine modification. A Calponin-homology (CH) 1 domain is found at 920–1056; it reads KASKEILLAF…LLWKIAFAFQ (137 aa). Residues 1057–1078 adopt a coiled-coil conformation; that stretch reads VDISLNLDQLKEEIAFLKHTKS. S1103 is subject to Phosphoserine. The Calponin-homology (CH) 2 domain occupies 1110–1261; it reads SENIKLLMDW…YLSFLCARLL (152 aa). 39 IQ domains span residues 1347–1378, 1393–1422, 1582–1613, 1632–1661, 1655–1684, 1728–1757, 1751–1782, 1801–1830, 1824–1853, 1874–1903, 1897–1928, 1947–1978, 1970–2001, 2020–2049, 2043–2074, 2093–2124, 2116–2147, 2166–2197, 2189–2218, 2239–2270, 2262–2293, 2311–2342, 2334–2365, 2384–2415, 2407–2438, 2457–2488, 2530–2561, 2624–2653, 2665–2696, 2688–2719, 2738–2767, 2859–2890, 2909–2938, 2932–2963, 2954–2985, 3029–3060, 3079–3110, 3181–3210, and 3204–3235; these read QNKA…IILQ, YLWA…MLKS, LKKT…VIIQ, TRSA…SVIK, ILTS…ATIK, MRES…AVIS, QRKA…IVIQ, VKKA…AALK, QSIA…SIIK, TKAA…AALK, EHQA…LVIQ, LRHA…IIIQ, QHKC…LLIQ, TKAA…AAVT, CNKA…IIIQ, LKKT…TFIK, MHRA…IVIQ, ILKA…TLIQ, MQTA…ITKT, LRHS…TLIQ, MHIA…ILIQ, VQNA…TFIQ, MHRA…VVIQ, QRHS…TLIQ, MHSS…IFVQ, LRKA…VLIQ, QWHS…IVIQ, QHQA…TVVS, RTQA…TLIQ, VQKS…EKMA, QKRA…VVLQ, IRSS…STIK, IKNS…KIQA, KVKA…KIIQ, RHRA…LIIQ, FKKS…RLLH, RNRA…GIIK, and FTSG…IRLS.

Interacts with KATNA1 and KATNB1; katanin complex formation KATNA1:KATNB1 is required for the association.

Its subcellular location is the cytoplasm. The protein localises to the cytoskeleton. It is found in the spindle. The protein resides in the nucleus. Involved in mitotic spindle regulation and coordination of mitotic processes. The function in regulating microtubule dynamics at spindle poles including spindle orientation, astral microtubule density and poleward microtubule flux seems to depend on the association with the katanin complex formed by KATNA1 and KATNB1. Enhances the microtubule lattice severing activity of KATNA1 by recruiting the katanin complex to microtubules. Can block microtubule minus-end growth and reversely this function can be enhanced by the katanin complex. May have a preferential role in regulating neurogenesis. This chain is Abnormal spindle-like microcephaly-associated protein (ASPM), found in Homo sapiens (Human).